The following is a 282-amino-acid chain: Elongation factor Ts (282 aa).

Residues 79 to 82 (TDFV) form an involved in Mg(2+) ion dislocation from EF-Tu region.

This sequence belongs to the EF-Ts family.

The protein localises to the cytoplasm. Associates with the EF-Tu.GDP complex and induces the exchange of GDP to GTP. It remains bound to the aminoacyl-tRNA.EF-Tu.GTP complex up to the GTP hydrolysis stage on the ribosome. The polypeptide is Elongation factor Ts (Shewanella piezotolerans (strain WP3 / JCM 13877)).